Reading from the N-terminus, the 472-residue chain is Siroheme synthase 2 (472 aa).

The precorrin-2 dehydrogenase /sirohydrochlorin ferrochelatase stretch occupies residues 1-204 (MDYFPIFCQL…EDQVQVEQHV (204 aa)). NAD(+) contacts are provided by residues 22–23 (EV) and 43–44 (CE). The residue at position 128 (Ser128) is a Phosphoserine. The tract at residues 216–472 (GEVVLVGAGP…GMKEQVERVG (257 aa)) is uroporphyrinogen-III C-methyltransferase. S-adenosyl-L-methionine is bound at residue Pro225. Asp248 functions as the Proton acceptor in the catalytic mechanism. Lys270 serves as the catalytic Proton donor. Residues 301–303 (GGD), Ile306, 331–332 (TA), Met382, and Gly411 contribute to the S-adenosyl-L-methionine site.

The protein in the N-terminal section; belongs to the precorrin-2 dehydrogenase / sirohydrochlorin ferrochelatase family. In the C-terminal section; belongs to the precorrin methyltransferase family.

It carries out the reaction uroporphyrinogen III + 2 S-adenosyl-L-methionine = precorrin-2 + 2 S-adenosyl-L-homocysteine + H(+). It catalyses the reaction precorrin-2 + NAD(+) = sirohydrochlorin + NADH + 2 H(+). The catalysed reaction is siroheme + 2 H(+) = sirohydrochlorin + Fe(2+). It participates in cofactor biosynthesis; adenosylcobalamin biosynthesis; precorrin-2 from uroporphyrinogen III: step 1/1. It functions in the pathway cofactor biosynthesis; adenosylcobalamin biosynthesis; sirohydrochlorin from precorrin-2: step 1/1. The protein operates within porphyrin-containing compound metabolism; siroheme biosynthesis; precorrin-2 from uroporphyrinogen III: step 1/1. Its pathway is porphyrin-containing compound metabolism; siroheme biosynthesis; siroheme from sirohydrochlorin: step 1/1. It participates in porphyrin-containing compound metabolism; siroheme biosynthesis; sirohydrochlorin from precorrin-2: step 1/1. In terms of biological role, multifunctional enzyme that catalyzes the SAM-dependent methylations of uroporphyrinogen III at position C-2 and C-7 to form precorrin-2 via precorrin-1. Then it catalyzes the NAD-dependent ring dehydrogenation of precorrin-2 to yield sirohydrochlorin. Finally, it catalyzes the ferrochelation of sirohydrochlorin to yield siroheme. In Yersinia enterocolitica serotype O:8 / biotype 1B (strain NCTC 13174 / 8081), this protein is Siroheme synthase 2.